Consider the following 35-residue polypeptide: Photosystem II reaction center protein T (35 aa).

Residues A3 to F23 form a helical membrane-spanning segment.

It belongs to the PsbT family. PSII is composed of 1 copy each of membrane proteins PsbA, PsbB, PsbC, PsbD, PsbE, PsbF, PsbH, PsbI, PsbJ, PsbK, PsbL, PsbM, PsbT, PsbY, PsbZ, Psb30/Ycf12, at least 3 peripheral proteins of the oxygen-evolving complex and a large number of cofactors. It forms dimeric complexes.

It is found in the plastid. The protein localises to the chloroplast thylakoid membrane. Functionally, found at the monomer-monomer interface of the photosystem II (PS II) dimer, plays a role in assembly and dimerization of PSII. PSII is a light-driven water plastoquinone oxidoreductase, using light energy to abstract electrons from H(2)O, generating a proton gradient subsequently used for ATP formation. This Cycas revoluta (Sago palm) protein is Photosystem II reaction center protein T.